A 460-amino-acid polypeptide reads, in one-letter code: Argininosuccinate lyase (460 aa).

Belongs to the lyase 1 family. Argininosuccinate lyase subfamily.

Its subcellular location is the cytoplasm. The catalysed reaction is 2-(N(omega)-L-arginino)succinate = fumarate + L-arginine. It participates in amino-acid biosynthesis; L-arginine biosynthesis; L-arginine from L-ornithine and carbamoyl phosphate: step 3/3. The chain is Argininosuccinate lyase from Limosilactobacillus fermentum (strain NBRC 3956 / LMG 18251) (Lactobacillus fermentum).